The primary structure comprises 322 residues: Eukaryotic translation initiation factor 3 subunit I (322 aa).

WD repeat units follow at residues 4–43 (GHER…RLGT), 46–85 (GHQG…VIAS), 141–180 (MVES…KVVD), 184–223 (DHTA…CLKT), and 281–322 (GHFG…NIFE).

The protein belongs to the eIF-3 subunit I family. As to quaternary structure, component of the eukaryotic translation initiation factor 3 (eIF-3) complex. The eIF-3 complex interacts with pix.

Its subcellular location is the cytoplasm. In terms of biological role, component of the eukaryotic translation initiation factor 3 (eIF-3) complex, which is involved in protein synthesis of a specialized repertoire of mRNAs and, together with other initiation factors, stimulates binding of mRNA and methionyl-tRNAi to the 40S ribosome. The eIF-3 complex specifically targets and initiates translation of a subset of mRNAs involved in cell proliferation. This is Eukaryotic translation initiation factor 3 subunit I from Drosophila virilis (Fruit fly).